The sequence spans 857 residues: uncharacterized protein (857 aa).

Disordered regions lie at residues 316-339 (PPAPSLEQPENKTMPEIKEGTKEN), 484-561 (AKQP…PRTN), 619-777 (GQFP…PKPQ), and 809-836 (EQRPEREAMKRQAQQERENAVKNPSTGK). Composition is skewed to basic and acidic residues over residues 324–339 (PENKTMPEIKEGTKEN), 518–534 (KKTEELKQSRNTAKAEE), and 630–640 (QRAESSIDKDC). Over residues 683-700 (RTTTVQPHSHSAQPTTLR) the composition is skewed to polar residues. Low complexity predominate over residues 708–725 (SSSLIASAKPAPPISSSS). The span at 726-738 (TGPNVTNPNQSSA) shows a compositional bias: polar residues. Over residues 809–828 (EQRPEREAMKRQAQQERENA) the composition is skewed to basic and acidic residues.

This is an uncharacterized protein from Mus musculus (Mouse).